The chain runs to 152 residues: Ribosome maturation factor RimP (152 aa).

It belongs to the RimP family.

Its subcellular location is the cytoplasm. Its function is as follows. Required for maturation of 30S ribosomal subunits. In Fervidobacterium nodosum (strain ATCC 35602 / DSM 5306 / Rt17-B1), this protein is Ribosome maturation factor RimP.